Reading from the N-terminus, the 194-residue chain is Orotate phosphoribosyltransferase (194 aa).

117–125 (EDIVTTGLS) serves as a coordination point for 5-phospho-alpha-D-ribose 1-diphosphate. T121 and R149 together coordinate orotate.

This sequence belongs to the purine/pyrimidine phosphoribosyltransferase family. PyrE subfamily. As to quaternary structure, homodimer. Mg(2+) serves as cofactor.

It catalyses the reaction orotidine 5'-phosphate + diphosphate = orotate + 5-phospho-alpha-D-ribose 1-diphosphate. Its pathway is pyrimidine metabolism; UMP biosynthesis via de novo pathway; UMP from orotate: step 1/2. Catalyzes the transfer of a ribosyl phosphate group from 5-phosphoribose 1-diphosphate to orotate, leading to the formation of orotidine monophosphate (OMP). The polypeptide is Orotate phosphoribosyltransferase (Parvibaculum lavamentivorans (strain DS-1 / DSM 13023 / NCIMB 13966)).